Consider the following 251-residue polypeptide: Cobalt transport protein CbiM (251 aa).

A signal peptide spans 1–27 (MNKKKNTILIGLYFLVGIMLFPDRIYA). Helical transmembrane passes span 35 to 55 (LPVK…ALGI), 66 to 86 (GPGI…LSSL), 103 to 123 (LGAI…VLIF), 131 to 151 (GGLT…PFVA), 166 to 186 (WLSV…TTAT), and 208 to 228 (VFAT…VLIF).

This sequence belongs to the CbiM family. As to quaternary structure, forms an energy-coupling factor (ECF) transporter complex composed of an ATP-binding protein (A component, CbiO), a transmembrane protein (T component, CbiQ) and 2 possible substrate-capture proteins (S components, CbiM and CbiN) of unknown stoichimetry.

The protein resides in the cell membrane. Its pathway is cofactor biosynthesis; adenosylcobalamin biosynthesis. Its function is as follows. Part of the energy-coupling factor (ECF) transporter complex CbiMNOQ involved in cobalt import. This Acetohalobium arabaticum (strain ATCC 49924 / DSM 5501 / Z-7288) protein is Cobalt transport protein CbiM.